A 228-amino-acid chain; its full sequence is Latherin (228 aa).

The N-terminal stretch at 1-20 (MLKVSCLFVLLCGLLVPSSA) is a signal peptide. Cysteines 153 and 196 form a disulfide.

This sequence belongs to the BPI/LBP/Plunc superfamily. Plunc family. As to quaternary structure, monomer. Post-translationally, no sign of N-X-[ST] acceptor site even though reported as N-glycosylated. As to expression, found in sweat (at protein level).

It localises to the secreted. Its function is as follows. Major protein in sweat, has surfactant properties. Has a role in temperature regulation by having a capacity to make hydrophobic surfaces wettable and so can function in promoting spreading and evaporation of sweat. The protein is Latherin (LATH) of Equus caballus (Horse).